The sequence spans 244 residues: Transcriptional activator protein anr (244 aa).

Position 21–149 (21–149) interacts with a nucleoside 3',5'-cyclic phosphate; the sequence is APLCLPLSLT…RLMSREIRDD (129 aa). The HTH crp-type domain maps to 159 to 232; it reads KTADERIATF…GKEVHILDSI (74 aa). The H-T-H motif DNA-binding region spans 192–211; that stretch reads RNEIGNYLGLAVETVSRVFT.

Transcriptional activator of anaerobic gene expression. This chain is Transcriptional activator protein anr (anr), found in Pseudomonas aeruginosa (strain ATCC 15692 / DSM 22644 / CIP 104116 / JCM 14847 / LMG 12228 / 1C / PRS 101 / PAO1).